Consider the following 308-residue polypeptide: Methionyl-tRNA formyltransferase (308 aa).

109-112 contacts (6S)-5,6,7,8-tetrahydrofolate; it reads SLLP.

This sequence belongs to the Fmt family.

The enzyme catalyses L-methionyl-tRNA(fMet) + (6R)-10-formyltetrahydrofolate = N-formyl-L-methionyl-tRNA(fMet) + (6S)-5,6,7,8-tetrahydrofolate + H(+). Functionally, attaches a formyl group to the free amino group of methionyl-tRNA(fMet). The formyl group appears to play a dual role in the initiator identity of N-formylmethionyl-tRNA by promoting its recognition by IF2 and preventing the misappropriation of this tRNA by the elongation apparatus. This is Methionyl-tRNA formyltransferase from Methylobacillus flagellatus (strain ATCC 51484 / DSM 6875 / VKM B-1610 / KT).